The primary structure comprises 532 residues: Apolipoprotein N-acyltransferase (532 aa).

Transmembrane regions (helical) follow at residues 37 to 57 (IFVA…GAIA), 75 to 95 (WWFG…ALLV), 106 to 126 (LAVL…AMIA), 128 to 148 (LLWS…ALAE), 179 to 199 (VIGL…PALL), and 207 to 227 (TGIG…AWTL). Residues 245–494 (VQPSIAQAMK…VGVVDSYLPS (250 aa)) form the CN hydrolase domain. The active-site Proton acceptor is Glu289. Lys353 is an active-site residue. The active-site Nucleophile is the Cys406. Residues 505-525 (GWIQTVLILLTLLAASVGLIL) traverse the membrane as a helical segment.

The protein belongs to the CN hydrolase family. Apolipoprotein N-acyltransferase subfamily.

The protein resides in the cell inner membrane. It carries out the reaction N-terminal S-1,2-diacyl-sn-glyceryl-L-cysteinyl-[lipoprotein] + a glycerophospholipid = N-acyl-S-1,2-diacyl-sn-glyceryl-L-cysteinyl-[lipoprotein] + a 2-acyl-sn-glycero-3-phospholipid + H(+). The protein operates within protein modification; lipoprotein biosynthesis (N-acyl transfer). In terms of biological role, catalyzes the phospholipid dependent N-acylation of the N-terminal cysteine of apolipoprotein, the last step in lipoprotein maturation. This Brucella suis biovar 1 (strain 1330) protein is Apolipoprotein N-acyltransferase.